The chain runs to 256 residues: Alcohol dehydrogenase (256 aa).

S2 carries the N-acetylserine modification. NAD(+) contacts are provided by residues 12–41 and D65; that span reads FVAG…LDRI. S140 serves as a coordination point for substrate. Catalysis depends on Y153, which acts as the Proton acceptor. K157 contacts NAD(+).

The protein belongs to the short-chain dehydrogenases/reductases (SDR) family. Homodimer.

It catalyses the reaction a primary alcohol + NAD(+) = an aldehyde + NADH + H(+). The enzyme catalyses a secondary alcohol + NAD(+) = a ketone + NADH + H(+). With respect to regulation, inhibited by 2,2,2-trifluoroethanol and pyrazole. This is Alcohol dehydrogenase (Adh) from Drosophila melanogaster (Fruit fly).